The sequence spans 346 residues: Phosphoribosylformylglycinamidine cyclo-ligase (346 aa).

It belongs to the AIR synthase family.

The protein localises to the cytoplasm. The enzyme catalyses 2-formamido-N(1)-(5-O-phospho-beta-D-ribosyl)acetamidine + ATP = 5-amino-1-(5-phospho-beta-D-ribosyl)imidazole + ADP + phosphate + H(+). It functions in the pathway purine metabolism; IMP biosynthesis via de novo pathway; 5-amino-1-(5-phospho-D-ribosyl)imidazole from N(2)-formyl-N(1)-(5-phospho-D-ribosyl)glycinamide: step 2/2. This Geobacillus sp. (strain WCH70) protein is Phosphoribosylformylglycinamidine cyclo-ligase.